A 220-amino-acid polypeptide reads, in one-letter code: UPF0319 protein YccT (220 aa).

An N-terminal signal peptide occupies residues 1-20; it reads MKTGIVTTLIALCLPVSVFA.

Belongs to the UPF0319 family.

This is UPF0319 protein YccT from Shigella flexneri serotype 5b (strain 8401).